A 247-amino-acid polypeptide reads, in one-letter code: Carboxy-S-adenosyl-L-methionine synthase (247 aa).

S-adenosyl-L-methionine contacts are provided by residues Tyr-40, 65–67 (GCS), 90–91 (DN), 122–123 (DI), Asn-137, and Arg-204.

Belongs to the class I-like SAM-binding methyltransferase superfamily. Cx-SAM synthase family. Homodimer.

The catalysed reaction is prephenate + S-adenosyl-L-methionine = carboxy-S-adenosyl-L-methionine + 3-phenylpyruvate + H2O. Functionally, catalyzes the conversion of S-adenosyl-L-methionine (SAM) to carboxy-S-adenosyl-L-methionine (Cx-SAM). The chain is Carboxy-S-adenosyl-L-methionine synthase from Pseudomonas syringae pv. tomato (strain ATCC BAA-871 / DC3000).